A 1097-amino-acid chain; its full sequence is DNA-directed RNA polymerase subunit beta (1097 aa).

A disordered region spans residues 1073 to 1097 (DINPRRNTPSRPTYESLGTSEYEED). Polar residues predominate over residues 1077-1091 (RRNTPSRPTYESLGT).

This sequence belongs to the RNA polymerase beta chain family. As to quaternary structure, in cyanobacteria the RNAP catalytic core is composed of 2 alpha, 1 beta, 1 beta', 1 gamma and 1 omega subunit. When a sigma factor is associated with the core the holoenzyme is formed, which can initiate transcription.

It carries out the reaction RNA(n) + a ribonucleoside 5'-triphosphate = RNA(n+1) + diphosphate. In terms of biological role, DNA-dependent RNA polymerase catalyzes the transcription of DNA into RNA using the four ribonucleoside triphosphates as substrates. This Prochlorococcus marinus (strain MIT 9312) protein is DNA-directed RNA polymerase subunit beta.